A 553-amino-acid chain; its full sequence is Methionine--tRNA ligase (553 aa).

Residues P12–H22 carry the 'HIGH' region motif. Zn(2+) is bound by residues C144, C147, C157, and C160. Residues K332 to S336 carry the 'KMSKS' region motif. K335 provides a ligand contact to ATP.

It belongs to the class-I aminoacyl-tRNA synthetase family. MetG type 1 subfamily. Monomer. Zn(2+) serves as cofactor.

It is found in the cytoplasm. The catalysed reaction is tRNA(Met) + L-methionine + ATP = L-methionyl-tRNA(Met) + AMP + diphosphate. In terms of biological role, is required not only for elongation of protein synthesis but also for the initiation of all mRNA translation through initiator tRNA(fMet) aminoacylation. The polypeptide is Methionine--tRNA ligase (Dehalococcoides mccartyi (strain ATCC BAA-2100 / JCM 16839 / KCTC 5957 / BAV1)).